The following is a 204-amino-acid chain: Protease (204 aa).

Active-site residues include histidine 53, aspartate 70, and cysteine 121.

This sequence belongs to the peptidase C5 family. Interacts with protease cofactor pVI-C; this interaction is necessary for protease activation.

It localises to the virion. The protein localises to the host nucleus. It carries out the reaction Cleaves proteins of the adenovirus and its host cell at two consensus sites: -Yaa-Xaa-Gly-Gly-|-Xaa- and -Yaa-Xaa-Gly-Xaa-|-Gly- (in which Yaa is Met, Ile or Leu, and Xaa is any amino acid).. With respect to regulation, requires DNA and protease cofactor for maximal activation. Inside nascent virions, becomes partially activated by binding to the viral DNA, allowing it to cleave the cofactor that binds to the protease and fully activates it. Actin, like the viral protease cofactor, seems to act as a cofactor in the cleavage of cytokeratin 18 and of actin itself. Functionally, cleaves viral precursor proteins (pTP, pIIIa, pVI, pVII, pVIII, and pX) inside newly assembled particles giving rise to mature virions. Protease complexed to its cofactor slides along the viral DNA to specifically locate and cleave the viral precursors. Mature virions have a weakened organization compared to the unmature virions, thereby facilitating subsequent uncoating. Without maturation, the particle lacks infectivity and is unable to uncoat. Late in adenovirus infection, in the cytoplasm, may participate in the cytoskeleton destruction. Cleaves host cell cytoskeletal keratins K7 and K18. The polypeptide is Protease (Porcine adenovirus A serotype 3 (PAdV-3)).